The chain runs to 392 residues: Putative nicotinate phosphoribosyltransferase (392 aa).

Tyrosine 21, phenylalanine 138, and threonine 179 together coordinate nicotinate. A Phosphohistidine modification is found at histidine 182. Arginine 235 contacts nicotinate. Residues serine 240, glycine 272, and threonine 293 each contribute to the 5-phospho-alpha-D-ribose 1-diphosphate site. Zn(2+) contacts are provided by cysteine 330, cysteine 333, cysteine 348, and cysteine 350.

Belongs to the NAPRTase family. Highly divergent. In terms of assembly, homodimer. Forms a trimer of dimers in the crystal. Transiently phosphorylated on a His residue during the reaction cycle. Phosphorylation strongly increases the affinity for substrates and increases the rate of nicotinate D-ribonucleotide production. Dephosphorylation regenerates the low-affinity form of the enzyme, leading to product release.

The catalysed reaction is nicotinate + 5-phospho-alpha-D-ribose 1-diphosphate + ATP + H2O = nicotinate beta-D-ribonucleotide + ADP + phosphate + diphosphate. Its pathway is cofactor biosynthesis; NAD(+) biosynthesis; nicotinate D-ribonucleotide from nicotinate: step 1/1. Its function is as follows. Catalyzes the synthesis of beta-nicotinate D-ribonucleotide from nicotinate and 5-phospho-D-ribose 1-phosphate at the expense of ATP. The polypeptide is Putative nicotinate phosphoribosyltransferase (Thermoplasma acidophilum (strain ATCC 25905 / DSM 1728 / JCM 9062 / NBRC 15155 / AMRC-C165)).